The primary structure comprises 390 residues: Coiled-coil domain-containing protein 85C (390 aa).

Coiled coils occupy residues 26-86 (KEEL…RELC) and 116-146 (KEVG…KEII). Residues 153 to 237 (RNGPGSRSSI…RSIPNGLNDS (85 aa)) are disordered. Positions 157 to 172 (GSRSSIDSQNSLTNLN) are enriched in polar residues. Low complexity predominate over residues 182 to 194 (DGSSTSSTGSAGS).

This sequence belongs to the CCDC85 family.

Its subcellular location is the cell junction. The protein localises to the tight junction. It localises to the adherens junction. Its function is as follows. May play a role in cell-cell adhesion and epithelium development. May play an important role in cortical development, especially in the maintenance of radial glia. The polypeptide is Coiled-coil domain-containing protein 85C (ccdc85c) (Xenopus laevis (African clawed frog)).